Here is a 270-residue protein sequence, read N- to C-terminus: Cell division protein DivIB (270 aa).

Residues 1–38 (MTRRNNPELNDEREPIDKIKASIDLKKKTIRRNKRKRR) are Cytoplasmic-facing. A helical membrane pass occupies residues 39–59 (LIKMLQFLIVIGVLIGIYYFD). At 60–270 (KSDASRVHNV…QSAVVKACGS (211 aa)) the chain is on the extracellular side. One can recognise a POTRA domain in the interval 64 to 135 (SRVHNVRVNG…INLNVTEKKA (72 aa)).

This sequence belongs to the FtsQ/DivIB family. DivIB subfamily.

It localises to the cell membrane. Its function is as follows. Cell division protein that may be involved in stabilizing or promoting the assembly of the division complex. This chain is Cell division protein DivIB, found in Erysipelothrix rhusiopathiae (strain Fujisawa).